The following is a 92-amino-acid chain: Pyrimidine/purine nucleoside phosphorylase (92 aa).

This sequence belongs to the nucleoside phosphorylase PpnP family.

The enzyme catalyses a purine D-ribonucleoside + phosphate = a purine nucleobase + alpha-D-ribose 1-phosphate. It catalyses the reaction adenosine + phosphate = alpha-D-ribose 1-phosphate + adenine. It carries out the reaction cytidine + phosphate = cytosine + alpha-D-ribose 1-phosphate. The catalysed reaction is guanosine + phosphate = alpha-D-ribose 1-phosphate + guanine. The enzyme catalyses inosine + phosphate = alpha-D-ribose 1-phosphate + hypoxanthine. It catalyses the reaction thymidine + phosphate = 2-deoxy-alpha-D-ribose 1-phosphate + thymine. It carries out the reaction uridine + phosphate = alpha-D-ribose 1-phosphate + uracil. The catalysed reaction is xanthosine + phosphate = alpha-D-ribose 1-phosphate + xanthine. Its function is as follows. Catalyzes the phosphorolysis of diverse nucleosides, yielding D-ribose 1-phosphate and the respective free bases. Can use uridine, adenosine, guanosine, cytidine, thymidine, inosine and xanthosine as substrates. Also catalyzes the reverse reactions. The protein is Pyrimidine/purine nucleoside phosphorylase of Rhodopirellula baltica (strain DSM 10527 / NCIMB 13988 / SH1).